The primary structure comprises 602 residues: MTTQVPKRLRQPIVVVLGHVDHGKTTLLDKIRGTAVVKKEPGEMTQEVGASFVPTSVIEKISEPLKKSFPIKLEIPGLLFIDTPGHELFSNLRKRGGSVADIAILVVDIVEGIQKQTLESIEILKSRKVPFIVAANKIDRINGWKAQDTYSFLESINKQEQRVRDNLDKQVYNLVIQLAEQGFNAERFDRIRDFTKTVAIIPVSAKTGEGIAEVLAILAGLTQNYMKNKLKFAEGPAKGVILEVKELQGLGYTADVVIYEGILRKNDIIVLAGIDGPIVTKVRAILVPRPLQDIKLAKSDLAQIDEVYAASGVKVYAQNLETALAGSPIYVAENNEEVEKYKKIIQEEVSAVRYYNSSVYGIIVKADSLGSLEAIVSSLERRNIPIRLADIGPISKRDITEAEIVAEKAKEYGIIAAFRVKPLSGIEIPEKIKLISDDIIYQLMDNIEKYIEDIKESEKRKTLETIVLPGKIKIIPGYVFRRSDPVIVGVEVLGGIIRPKYGLIKKDGRRVGEVLQIQDNKKSVDRASKGMEVAVSIKGNIMVGRQVEEGEVLYTDVPKEDLQILMEKYKDIVTDDMIEVIKEIIRIKRTQDATYGLGLQFQ.

The region spanning 9-229 (LRQPIVVVLG…GLTQNYMKNK (221 aa)) is the tr-type G domain. A G1 region spans residues 18 to 25 (GHVDHGKT). Residue 18–25 (GHVDHGKT) participates in GTP binding. Positions 43–47 (EMTQE) are G2. Positions 82–85 (DTPG) are G3. GTP-binding positions include 82-86 (DTPGH) and 136-139 (NKID). The G4 stretch occupies residues 136 to 139 (NKID). The tract at residues 204 to 206 (SAK) is G5.

The protein belongs to the TRAFAC class translation factor GTPase superfamily. Classic translation factor GTPase family. IF-2 subfamily.

Function in general translation initiation by promoting the binding of the formylmethionine-tRNA to ribosomes. Seems to function along with eIF-2. The sequence is that of Probable translation initiation factor IF-2 (infB) from Sulfolobus acidocaldarius (strain ATCC 33909 / DSM 639 / JCM 8929 / NBRC 15157 / NCIMB 11770).